A 174-amino-acid chain; its full sequence is Ribosome maturation factor RimM (174 aa).

In terms of domain architecture, PRC barrel spans G97 to Y173.

Belongs to the RimM family. In terms of assembly, binds ribosomal protein uS19.

It is found in the cytoplasm. In terms of biological role, an accessory protein needed during the final step in the assembly of 30S ribosomal subunit, possibly for assembly of the head region. Essential for efficient processing of 16S rRNA. May be needed both before and after RbfA during the maturation of 16S rRNA. It has affinity for free ribosomal 30S subunits but not for 70S ribosomes. The chain is Ribosome maturation factor RimM from Flavobacterium johnsoniae (strain ATCC 17061 / DSM 2064 / JCM 8514 / BCRC 14874 / CCUG 350202 / NBRC 14942 / NCIMB 11054 / UW101) (Cytophaga johnsonae).